The primary structure comprises 318 residues: Ferredoxin--NADP reductase (318 aa).

FAD is bound by residues aspartate 33, glutamine 41, tyrosine 46, valine 84, phenylalanine 115, aspartate 276, and threonine 316.

This sequence belongs to the ferredoxin--NADP reductase type 2 family. As to quaternary structure, homodimer. FAD is required as a cofactor.

The enzyme catalyses 2 reduced [2Fe-2S]-[ferredoxin] + NADP(+) + H(+) = 2 oxidized [2Fe-2S]-[ferredoxin] + NADPH. The polypeptide is Ferredoxin--NADP reductase (Lactobacillus gasseri (strain ATCC 33323 / DSM 20243 / BCRC 14619 / CIP 102991 / JCM 1131 / KCTC 3163 / NCIMB 11718 / NCTC 13722 / AM63)).